The primary structure comprises 35 residues: Peptide Hact-3 (35 aa).

Expressed in tentacles.

It is found in the nematocyst. It localises to the secreted. In terms of biological role, peptide with unknown function. Does not exhibit antimicrobial activity against Escherichia coli and Staphylococcus aureus. The protein is Peptide Hact-3 of Heliofungia actiniformis (Mushroom coral).